A 1349-amino-acid chain; its full sequence is Adhesion G protein-coupled receptor F5 (1349 aa).

A signal peptide spans 1 to 24 (MKSSRTVTLYFVLIVICSSEATWS). The Extracellular portion of the chain corresponds to 25 to 1016 (RPAEPIVHPL…PGSLLKILLD (992 aa)). 16 N-linked (GlcNAc...) asparagine glycosylation sites follow: Asn73, Asn94, Asn185, Asn254, Asn270, Asn286, Asn299, Asn326, Asn337, Asn349, Asn396, Asn470, Asn503, Asn538, Asn649, and Asn666. In terms of domain architecture, SEA spans 163 to 271 (PETYITLKIK…NSFQGTPSNE (109 aa)). Ig-like domains lie at 268 to 366 (PSNE…LDVT), 367 to 464 (PIRI…IAVT), and 469 to 559 (ANLT…KDVT). Cys291 and Cys348 are disulfide-bonded. A disulfide bridge links Cys389 with Cys447. Residues Cys490 and Cys543 are joined by a disulfide bond. Residue Ser819 is modified to Phosphoserine. Residues Asn820, Asn958, and Asn963 are each glycosylated (N-linked (GlcNAc...) asparagine). One can recognise a GAIN-B domain in the interval 842–1006 (TPPFLFHPNV…SILMSPDSPD (165 aa)). 2 disulfides stabilise this stretch: Cys954-Cys988 and Cys973-Cys990. The interval 954 to 1006 (CVFWNFSLANNTGGWDSSGCTVEDDGRDNRDRVFCKCNHLTSFSILMSPDSPD) is GPS. The tethered agonist stretch occupies residues 994–1009 (TSFSILMSPDSPDPGS). Residues 1017 to 1036 (IISYIGLGFSIVSLAACLVV) form a helical membrane-spanning segment. At 1037–1055 (EAMVWKSVTKNRTSYMRHI) the chain is on the cytoplasmic side. A helical membrane pass occupies residues 1056-1078 (CIVNIALCLLIADIWFIVAGAIH). At 1079–1097 (DGHYPLNETACVAATFFIH) the chain is on the extracellular side. N-linked (GlcNAc...) asparagine glycosylation is present at Asn1085. Residues 1098-1120 (FFYLSVFFWMLTLGLMLFYRLIF) traverse the membrane as a helical segment. Over 1121–1131 (ILHDASKSTQK) the chain is Cytoplasmic. Residues 1132–1154 (AIAFSLGYGCPLIISSITVGVTQ) traverse the membrane as a helical segment. Over 1155–1173 (PQEVYMRKNACWLNWEDTR) the chain is Extracellular. A helical transmembrane segment spans residues 1174–1196 (ALLAFAIPALIIVVVNVSITVVV). The Cytoplasmic segment spans residues 1197–1216 (ITKILRPSVGDKPGKQEKSS). Residues 1217–1239 (LFQISKSIGVLTPLLGLTWGFGL) form a helical membrane-spanning segment. The Extracellular segment spans residues 1240-1248 (ATVIQGSNA). A helical membrane pass occupies residues 1249–1271 (VFHIIFTLLNAFQGLFILLFGCL). The Cytoplasmic segment spans residues 1272 to 1349 (WDQKVQEALL…NSSSAYSLLN (78 aa)). A Phosphothreonine modification is found at Thr1303. The residue at position 1310 (Ser1310) is a Phosphoserine. The span at 1329 to 1343 (STPETTSSSVENSSS) shows a compositional bias: low complexity. Residues 1329 to 1349 (STPETTSSSVENSSSAYSLLN) are disordered.

This sequence belongs to the G-protein coupled receptor 2 family. Adhesion G-protein coupled receptor (ADGR) subfamily. In terms of assembly, homodimer; disulfide-linked. Heterodimer of 2 chains generated by proteolytic processing; the large extracellular N-terminal fragment and the membrane-bound C-terminal fragment predominantly remain associated and non-covalently linked. Fragment generates by the processing enzyme furin remains attached to the extracellular N-terminal fragment. Interacts (via N-terminal extracellular domain) with SFTPD. Highly glycosylated. In terms of processing, proteolytically cleaved at multiple sites: one in the GPS region of the GAIN-B domain (S1 site) and the other in the SEA domain (S2 site). The proteolytic cleavage at S1 site generates an extracellular subunit and a seven-transmembrane subunit. The proteolytic cleavage at S2 site generates a fragment that undergoes proteolytic cleavage by the processing enzyme furin. Highly expressed in the lung and to a much lesser extent in the kidney and heart. Dense localization in alveolar walls of the lung and in the intercalated cells of the collecting duct of the kidney.

Its subcellular location is the cell membrane. As an adhesion G protein-coupled receptor (aGPCR) exhibits a large N-terminal extracellular domain containing highly conserved GPCR autoproteolysis-inducing (GAIN) domain. During synthesis, intracellular autoproteolytic processing of nascent chain within the GAIN domain generates a mature protein, consisting of an N-terminal fragment that is non-covalently linked to the C-terminal fragment. The mature protein is routed to the plasma membrane where the N- and C-terminal fragments remain associated, forming the holoreceptor. Dissociation of the aGPCR fragments stimulates G protein signaling through the action of the tethered-peptide agonist stalk that is occluded within the GAIN domain in the holoreceptor form. This dissociation might be induced by ligand binding, such as that of sFNDC4. Functionally, receptor that plays a critical role in lung surfactant homeostasis. May play a role in controlling adipocyte function. In terms of biological role, adhesion G protein-coupled receptor. In alveolar type II (ATII or AT2) cells, required for normal lung surfactant homeostasis. Modulation of both surfactant secretion and uptake by ATII cells is mediated by the downstream activation of GNAQ/GNA11 proteins and may be a consequence of increased cortical F-actin assembly induced by ADGRF5 activation. In the kidney, may play a role in the regulation of acid excretion into the primary urine, possibly by regulating the surface expression of V-ATPase proton pump. As a receptor for soluble FNDC4 (sFNDC4), required for proper systemic glucose tolerance, specifically sensitizing white adipose tissue to insulin. Also plays a role in sFNDC4-induced decrease of local inflammation in white adipose tissue. This Rattus norvegicus (Rat) protein is Adhesion G protein-coupled receptor F5 (Adgrf5).